A 384-amino-acid chain; its full sequence is FAD-dependent urate hydroxylase (384 aa).

FAD is bound by residues glycine 11, 30-31, serine 43, and valine 125; that span reads EA. Residues asparagine 178, arginine 204, and 216–218 contribute to the substrate site; that span reads YFF. FAD is bound by residues aspartate 285 and 295-299; that span reads GQGGC.

This sequence belongs to the FAD-dependent urate hydroxylase family. As to quaternary structure, monomer. FAD is required as a cofactor.

It catalyses the reaction urate + NADH + O2 + H(+) = 5-hydroxyisourate + NAD(+) + H2O. It functions in the pathway purine metabolism; urate degradation. Catalyzes the hydroxylation of urate to 5-hydroxyisourate (HIU). The protein is FAD-dependent urate hydroxylase of Klebsiella pneumoniae subsp. pneumoniae (strain ATCC 700721 / MGH 78578).